Reading from the N-terminus, the 256-residue chain is Phosphonates import ATP-binding protein PhnC (256 aa).

The ABC transporter domain maps to 3 to 247; it reads LELKNISKTY…VLHKEIFTNV (245 aa). 36 to 43 is an ATP binding site; the sequence is GLSGAGKS.

This sequence belongs to the ABC transporter superfamily. Phosphonates importer (TC 3.A.1.9.1) family. As to quaternary structure, the complex is composed of two ATP-binding proteins (PhnC), two transmembrane proteins (PhnE) and a solute-binding protein (PhnD).

It is found in the cell inner membrane. It carries out the reaction phosphonate(out) + ATP + H2O = phosphonate(in) + ADP + phosphate + H(+). In terms of biological role, part of the ABC transporter complex PhnCDE involved in phosphonates import. Responsible for energy coupling to the transport system. This is Phosphonates import ATP-binding protein PhnC from Treponema denticola (strain ATCC 35405 / DSM 14222 / CIP 103919 / JCM 8153 / KCTC 15104).